Consider the following 235-residue polypeptide: NAD(P)H-quinone oxidoreductase subunit K, chloroplastic (235 aa).

Residues Cys43, Cys44, Cys108, and Cys139 each contribute to the [4Fe-4S] cluster site.

Belongs to the complex I 20 kDa subunit family. As to quaternary structure, NDH is composed of at least 16 different subunits, 5 of which are encoded in the nucleus. [4Fe-4S] cluster is required as a cofactor.

The protein resides in the plastid. Its subcellular location is the chloroplast thylakoid membrane. The catalysed reaction is a plastoquinone + NADH + (n+1) H(+)(in) = a plastoquinol + NAD(+) + n H(+)(out). It carries out the reaction a plastoquinone + NADPH + (n+1) H(+)(in) = a plastoquinol + NADP(+) + n H(+)(out). NDH shuttles electrons from NAD(P)H:plastoquinone, via FMN and iron-sulfur (Fe-S) centers, to quinones in the photosynthetic chain and possibly in a chloroplast respiratory chain. The immediate electron acceptor for the enzyme in this species is believed to be plastoquinone. Couples the redox reaction to proton translocation, and thus conserves the redox energy in a proton gradient. This is NAD(P)H-quinone oxidoreductase subunit K, chloroplastic from Ipomoea purpurea (Common morning glory).